Reading from the N-terminus, the 227-residue chain is Cytochrome c oxidase subunit 2 (227 aa).

The Mitochondrial intermembrane segment spans residues 1–14 (MAYPFQLGFQDATS). A helical membrane pass occupies residues 15 to 45 (PIMEELLHFHDHTLMIVFLISSLVLYIISSM). Residues 46-59 (LTTKLTHTSTMDAQ) lie on the Mitochondrial matrix side of the membrane. A helical transmembrane segment spans residues 60–87 (EVETIWTILPAIILILIALPSLRILYMM). Topologically, residues 88–227 (DEINNPSLTV…HFEEWSASML (140 aa)) are mitochondrial intermembrane. Residues His161, Cys196, Glu198, Cys200, His204, and Met207 each coordinate Cu cation. Position 198 (Glu198) interacts with Mg(2+).

Belongs to the cytochrome c oxidase subunit 2 family. As to quaternary structure, component of the cytochrome c oxidase (complex IV, CIV), a multisubunit enzyme composed of 14 subunits. The complex is composed of a catalytic core of 3 subunits MT-CO1, MT-CO2 and MT-CO3, encoded in the mitochondrial DNA, and 11 supernumerary subunits COX4I, COX5A, COX5B, COX6A, COX6B, COX6C, COX7A, COX7B, COX7C, COX8 and NDUFA4, which are encoded in the nuclear genome. The complex exists as a monomer or a dimer and forms supercomplexes (SCs) in the inner mitochondrial membrane with NADH-ubiquinone oxidoreductase (complex I, CI) and ubiquinol-cytochrome c oxidoreductase (cytochrome b-c1 complex, complex III, CIII), resulting in different assemblies (supercomplex SCI(1)III(2)IV(1) and megacomplex MCI(2)III(2)IV(2)). Found in a complex with TMEM177, COA6, COX18, COX20, SCO1 and SCO2. Interacts with TMEM177 in a COX20-dependent manner. Interacts with COX20. Interacts with COX16. Cu cation serves as cofactor.

The protein resides in the mitochondrion inner membrane. The catalysed reaction is 4 Fe(II)-[cytochrome c] + O2 + 8 H(+)(in) = 4 Fe(III)-[cytochrome c] + 2 H2O + 4 H(+)(out). In terms of biological role, component of the cytochrome c oxidase, the last enzyme in the mitochondrial electron transport chain which drives oxidative phosphorylation. The respiratory chain contains 3 multisubunit complexes succinate dehydrogenase (complex II, CII), ubiquinol-cytochrome c oxidoreductase (cytochrome b-c1 complex, complex III, CIII) and cytochrome c oxidase (complex IV, CIV), that cooperate to transfer electrons derived from NADH and succinate to molecular oxygen, creating an electrochemical gradient over the inner membrane that drives transmembrane transport and the ATP synthase. Cytochrome c oxidase is the component of the respiratory chain that catalyzes the reduction of oxygen to water. Electrons originating from reduced cytochrome c in the intermembrane space (IMS) are transferred via the dinuclear copper A center (CU(A)) of subunit 2 and heme A of subunit 1 to the active site in subunit 1, a binuclear center (BNC) formed by heme A3 and copper B (CU(B)). The BNC reduces molecular oxygen to 2 water molecules using 4 electrons from cytochrome c in the IMS and 4 protons from the mitochondrial matrix. This Equus caballus (Horse) protein is Cytochrome c oxidase subunit 2 (MT-CO2).